A 393-amino-acid polypeptide reads, in one-letter code: Pigment production hydroxylase (393 aa).

Involved in pigment production acting as a hydroxylase that transforms indole to indoxyl, resulting in the formation of indigo. The sequence is that of Pigment production hydroxylase from Rhodococcus erythropolis (Arthrobacter picolinophilus).